The sequence spans 514 residues: Maturase K (514 aa).

This sequence belongs to the intron maturase 2 family. MatK subfamily.

The protein localises to the plastid. Its subcellular location is the chloroplast. In terms of biological role, usually encoded in the trnK tRNA gene intron. Probably assists in splicing its own and other chloroplast group II introns. The sequence is that of Maturase K from Acer palmatum (Japanese maple).